Reading from the N-terminus, the 342-residue chain is Tetraacyldisaccharide 4'-kinase (342 aa).

Residue 68 to 75 coordinates ATP; it reads TVGGTGKT.

This sequence belongs to the LpxK family.

The catalysed reaction is a lipid A disaccharide + ATP = a lipid IVA + ADP + H(+). Its pathway is glycolipid biosynthesis; lipid IV(A) biosynthesis; lipid IV(A) from (3R)-3-hydroxytetradecanoyl-[acyl-carrier-protein] and UDP-N-acetyl-alpha-D-glucosamine: step 6/6. Functionally, transfers the gamma-phosphate of ATP to the 4'-position of a tetraacyldisaccharide 1-phosphate intermediate (termed DS-1-P) to form tetraacyldisaccharide 1,4'-bis-phosphate (lipid IVA). This chain is Tetraacyldisaccharide 4'-kinase, found in Burkholderia vietnamiensis (strain G4 / LMG 22486) (Burkholderia cepacia (strain R1808)).